Reading from the N-terminus, the 588-residue chain is Aspartate--tRNA ligase (588 aa).

Position 172 (Glu-172) interacts with L-aspartate. The interval 196–199 (QLFK) is aspartate. Arg-218 provides a ligand contact to L-aspartate. ATP contacts are provided by residues 218–220 (RDE) and Gln-227. His-449 serves as a coordination point for L-aspartate. Glu-483 is an ATP binding site. Arg-490 contributes to the L-aspartate binding site. Residue 535 to 538 (GLDR) participates in ATP binding.

The protein belongs to the class-II aminoacyl-tRNA synthetase family. Type 1 subfamily. In terms of assembly, homodimer.

The protein localises to the cytoplasm. It carries out the reaction tRNA(Asp) + L-aspartate + ATP = L-aspartyl-tRNA(Asp) + AMP + diphosphate. Its function is as follows. Catalyzes the attachment of L-aspartate to tRNA(Asp) in a two-step reaction: L-aspartate is first activated by ATP to form Asp-AMP and then transferred to the acceptor end of tRNA(Asp). This is Aspartate--tRNA ligase from Pasteurella multocida (strain Pm70).